The following is a 4265-amino-acid chain: Dynein axonemal heavy chain 1 (4265 aa).

The tract at residues 1–88 is disordered; it reads MEQPNSKGYS…KSPLTGTDKK (88 aa). A stem region spans residues 1–1542; sequence MEQPNSKGYS…YIRAVNAEFI (1542 aa). The span at 60–69 shows a compositional bias: pro residues; the sequence is PHLPLPPAPP. AAA stretches follow at residues 1543–1764, 1824–2057, 2189–2449, and 2547–2799; these read YGYE…VISA, EAIR…SSVK, TMVP…VFQG, and DYNQ…LTRH. A GPAGTGKT motif motif is present at residues 1581-1588; sequence GPAGTGKT. ATP is bound at residue 1581–1588; it reads GPAGTGKT. The CFDEFNR motif signature appears at 1631-1637; the sequence is CFDEFNR. ATP contacts are provided by residues 1862-1869, 2227-2234, and 2586-2593; these read GPTGSGKS, GPTGTGKT, and GVGGSGRS. The segment at 2814 to 3112 is stalk; it reads FSILIGQKKL…EELELKCEQC (299 aa). Positions 3074–3122 form a coiled coil; that stretch reads LDEAKQRLREVEDGIATMQAKYRECITKKEELELKCEQCEQRLGRAGKL. AAA regions lie at residues 3197 to 3427 and 3640 to 3859; these read LGNP…EIQA and MQDF…QLKM.

Belongs to the dynein heavy chain family. In terms of assembly, consists of at least two heavy chains and a number of intermediate and light chains. In terms of tissue distribution, expressed primarily in trachea and testis, 2 tissues containing axonemal structures. Also expressed in brain.

It is found in the cytoplasm. The protein localises to the cytoskeleton. The protein resides in the cilium axoneme. Its subcellular location is the cell projection. It localises to the cilium. It is found in the flagellum. Its function is as follows. Force generating protein of cilia required for sperm flagellum motility. Produces force towards the minus ends of microtubules. Dynein has ATPase activity; the force-producing power stroke is thought to occur on release of ADP. Required in spermatozoa for the formation of the inner dynein arms and biogenesis of the axoneme. This chain is Dynein axonemal heavy chain 1, found in Homo sapiens (Human).